Here is a 266-residue protein sequence, read N- to C-terminus: 26 kDa endochitinase 2 (266 aa).

The N-terminal stretch at 1-23 is a signal peptide; the sequence is MRSLAVVVAVVATVAMAIGTARG. Cystine bridges form between C46–C108, C120–C128, and C227–C259. Residue E90 is the Proton donor of the active site.

The protein belongs to the glycosyl hydrolase 19 family. Chitinase class II subfamily.

It carries out the reaction Random endo-hydrolysis of N-acetyl-beta-D-glucosaminide (1-&gt;4)-beta-linkages in chitin and chitodextrins.. Its function is as follows. Defense against chitin-containing fungal pathogens. This Hordeum vulgare (Barley) protein is 26 kDa endochitinase 2.